We begin with the raw amino-acid sequence, 29 residues long: L-serine dehydratase, beta chain (29 aa).

The protein belongs to the iron-sulfur dependent L-serine dehydratase family. As to quaternary structure, heterodimer of an alpha chain and a beta chain. Requires [4Fe-4S] cluster as cofactor.

The catalysed reaction is L-serine = pyruvate + NH4(+). It functions in the pathway carbohydrate biosynthesis; gluconeogenesis. The chain is L-serine dehydratase, beta chain from Anaerotignum propionicum (Clostridium propionicum).